Consider the following 478-residue polypeptide: Aspartyl/glutamyl-tRNA(Asn/Gln) amidotransferase subunit B (478 aa).

Belongs to the GatB/GatE family. GatB subfamily. Heterotrimer of A, B and C subunits.

The catalysed reaction is L-glutamyl-tRNA(Gln) + L-glutamine + ATP + H2O = L-glutaminyl-tRNA(Gln) + L-glutamate + ADP + phosphate + H(+). It catalyses the reaction L-aspartyl-tRNA(Asn) + L-glutamine + ATP + H2O = L-asparaginyl-tRNA(Asn) + L-glutamate + ADP + phosphate + 2 H(+). In terms of biological role, allows the formation of correctly charged Asn-tRNA(Asn) or Gln-tRNA(Gln) through the transamidation of misacylated Asp-tRNA(Asn) or Glu-tRNA(Gln) in organisms which lack either or both of asparaginyl-tRNA or glutaminyl-tRNA synthetases. The reaction takes place in the presence of glutamine and ATP through an activated phospho-Asp-tRNA(Asn) or phospho-Glu-tRNA(Gln). This Brevibacillus brevis (strain 47 / JCM 6285 / NBRC 100599) protein is Aspartyl/glutamyl-tRNA(Asn/Gln) amidotransferase subunit B.